Here is a 418-residue protein sequence, read N- to C-terminus: Glutamyl-tRNA reductase (418 aa).

Substrate contacts are provided by residues 49 to 52, Ser109, 114 to 116, and Gln120; these read TCNR and EPQ. Cys50 serves as the catalytic Nucleophile. 189-194 contacts NADP(+); it reads GAGETI.

Belongs to the glutamyl-tRNA reductase family. Homodimer.

It carries out the reaction (S)-4-amino-5-oxopentanoate + tRNA(Glu) + NADP(+) = L-glutamyl-tRNA(Glu) + NADPH + H(+). It functions in the pathway porphyrin-containing compound metabolism; protoporphyrin-IX biosynthesis; 5-aminolevulinate from L-glutamyl-tRNA(Glu): step 1/2. In terms of biological role, catalyzes the NADPH-dependent reduction of glutamyl-tRNA(Glu) to glutamate 1-semialdehyde (GSA). This Escherichia coli O7:K1 (strain IAI39 / ExPEC) protein is Glutamyl-tRNA reductase.